The sequence spans 147 residues: Epididymal secretory protein E3-beta (147 aa).

Residues 1 to 25 (MASSLKIWGTLLALLCILCTLLVQS) form the signal peptide.

In terms of tissue distribution, epididymis.

The protein resides in the secreted. In terms of biological role, possible function in sperm maturation. This Homo sapiens (Human) protein is Epididymal secretory protein E3-beta (EDDM3B).